The following is a 137-amino-acid chain: Proofreading thioesterase EntH (137 aa).

Residue glutamate 63 is the Nucleophile or proton acceptor of the active site.

The protein belongs to the thioesterase PaaI family. As to quaternary structure, homotetramer. Dimer of dimers. Interacts specifically with the aryl carrier protein (ArCP) domain of EntB.

It localises to the cytoplasm. The protein operates within siderophore biosynthesis; enterobactin biosynthesis. Functionally, required for optimal enterobactin synthesis. Acts as a proofreading enzyme that prevents EntB misacylation by hydrolyzing the thioester bound existing between EntB and wrongly charged molecules. This Cronobacter turicensis (strain DSM 18703 / CCUG 55852 / LMG 23827 / z3032) protein is Proofreading thioesterase EntH.